The primary structure comprises 217 residues: Transcriptional regulator NovE (217 aa).

The interval methionine 1–glycine 41 is disordered.

In terms of biological role, transcription regulator that specifically regulates expression of genes involved in the novobiocin biosynthesis pathway. Probably acts as a positive regulator of transcription. Does not bind DNA. This chain is Transcriptional regulator NovE (novE), found in Streptomyces niveus (Streptomyces spheroides).